We begin with the raw amino-acid sequence, 264 residues long: Indolethylamine N-methyltransferase (264 aa).

K14 bears the N6-succinyllysine mark. S-adenosyl-L-methionine is bound by residues Y21, Y26, 64–65 (GS), Y70, D86, and N91. The residue at position 97 (K97) is an N6-succinyllysine. Residues 143 to 144 (DV) and F164 contribute to the S-adenosyl-L-methionine site.

It belongs to the class I-like SAM-binding methyltransferase superfamily. NNMT/PNMT/TEMT family. Monomer. As to expression, detected in lung and liver (at protein level).

The protein localises to the cytoplasm. It carries out the reaction a tertiary amine + S-adenosyl-L-methionine = a methylated tertiary amine + S-adenosyl-L-homocysteine + H(+). It catalyses the reaction a secondary amine + S-adenosyl-L-methionine = a methylated secondary amine + S-adenosyl-L-homocysteine + H(+). The catalysed reaction is a primary amine + S-adenosyl-L-methionine = a methylated primary amine + S-adenosyl-L-homocysteine + H(+). The enzyme catalyses dimethyl sulfide + S-adenosyl-L-methionine = trimethylsulfonium + S-adenosyl-L-homocysteine. With respect to regulation, inhibited by the S-adenosyl-L-methionine analog sinefungin and by the product S-adenosyl-L-homocysteine. Catalyzes the N-methylation of tryptamine and structurally related compounds. Functions as a thioether S-methyltransferase and is active with a variety of thioethers and the corresponding selenium and tellurium compounds, including 3-methylthiopropionaldehyde, dimethyl selenide, dimethyl telluride, 2-methylthioethylamine, 2-methylthioethanol, methyl-n-propyl sulfide and diethyl sulfide. Plays an important role in the detoxification of selenium compounds. The sequence is that of Indolethylamine N-methyltransferase (Inmt) from Mus musculus (Mouse).